The primary structure comprises 461 residues: 3-isopropylmalate dehydratase large subunit (461 aa).

Positions 338, 398, and 401 each coordinate [4Fe-4S] cluster.

The protein belongs to the aconitase/IPM isomerase family. LeuC type 1 subfamily. As to quaternary structure, heterodimer of LeuC and LeuD. [4Fe-4S] cluster serves as cofactor.

The enzyme catalyses (2R,3S)-3-isopropylmalate = (2S)-2-isopropylmalate. The protein operates within amino-acid biosynthesis; L-leucine biosynthesis; L-leucine from 3-methyl-2-oxobutanoate: step 2/4. In terms of biological role, catalyzes the isomerization between 2-isopropylmalate and 3-isopropylmalate, via the formation of 2-isopropylmaleate. This chain is 3-isopropylmalate dehydratase large subunit, found in Streptococcus mutans serotype c (strain ATCC 700610 / UA159).